The following is a 62-amino-acid chain: Small ribosomal subunit protein bS21 (62 aa).

Positions 43 to 52 are enriched in basic and acidic residues; sequence VKKKLKSEAA. Positions 43–62 are disordered; that stretch reads VKKKLKSEAARKRKAKKKRF. Basic residues predominate over residues 53-62; sequence RKRKAKKKRF.

Belongs to the bacterial ribosomal protein bS21 family.

The polypeptide is Small ribosomal subunit protein bS21 (Levilactobacillus brevis (strain ATCC 367 / BCRC 12310 / CIP 105137 / JCM 1170 / LMG 11437 / NCIMB 947 / NCTC 947) (Lactobacillus brevis)).